Here is a 779-residue protein sequence, read N- to C-terminus: Endonuclease MutS2 (779 aa).

328–335 (GPNTGGKT) is a binding site for ATP. Residues 704-779 (LDLRGKRYEE…GSGATIVTLG (76 aa)) form the Smr domain.

It belongs to the DNA mismatch repair MutS family. MutS2 subfamily. As to quaternary structure, homodimer. Binds to stalled ribosomes, contacting rRNA.

In terms of biological role, endonuclease that is involved in the suppression of homologous recombination and thus may have a key role in the control of bacterial genetic diversity. Functionally, acts as a ribosome collision sensor, splitting the ribosome into its 2 subunits. Detects stalled/collided 70S ribosomes which it binds and splits by an ATP-hydrolysis driven conformational change. Acts upstream of the ribosome quality control system (RQC), a ribosome-associated complex that mediates the extraction of incompletely synthesized nascent chains from stalled ribosomes and their subsequent degradation. Probably generates substrates for RQC. The sequence is that of Endonuclease MutS2 from Streptococcus pyogenes serotype M49 (strain NZ131).